An 868-amino-acid chain; its full sequence is Coatomer subunit gamma (868 aa).

Positions 1–11 are enriched in basic residues; sequence MWRTKRGRTRR. The interval 1–22 is disordered; that stretch reads MWRTKRGRTRRRDAGGNPWQNL. HEAT repeat units follow at residues 64-101, 287-324, 326-359, and 360-396; these read REAT…IADD, RELS…LHPP, VNVC…GAES, and SVER…KFPR.

It belongs to the COPG family. In terms of assembly, oligomeric complex that consists of at least the alpha, beta, beta', gamma, delta, epsilon and zeta subunits.

The protein resides in the cytoplasm. The protein localises to the golgi apparatus membrane. Its subcellular location is the cytoplasmic vesicle. It is found in the COPI-coated vesicle membrane. It localises to the endoplasmic reticulum. In terms of biological role, the coatomer is a cytosolic protein complex that binds to dilysine motifs and reversibly associates with Golgi non-clathrin-coated vesicles, which further mediate biosynthetic protein transport from the ER, via the Golgi up to the trans Golgi network. Coatomer complex is required for budding from Golgi membranes, and is essential for the retrograde Golgi-to-ER transport of dilysine-tagged proteins. This chain is Coatomer subunit gamma, found in Anopheles gambiae (African malaria mosquito).